We begin with the raw amino-acid sequence, 188 residues long: Inner membrane-spanning protein YciB (188 aa).

Helical transmembrane passes span 22-42 (IYIA…VTWM), 50-70 (MTLV…VFHN), 72-92 (LFIK…LLVS), 121-141 (FAWA…AFWL), and 149-169 (FKVF…GVYI).

This sequence belongs to the YciB family.

It is found in the cell inner membrane. Plays a role in cell envelope biogenesis, maintenance of cell envelope integrity and membrane homeostasis. This chain is Inner membrane-spanning protein YciB, found in Pectobacterium carotovorum subsp. carotovorum (strain PC1).